A 227-amino-acid polypeptide reads, in one-letter code: DNA repair protein RecO (227 aa).

The protein belongs to the RecO family.

In terms of biological role, involved in DNA repair and RecF pathway recombination. This is DNA repair protein RecO from Pseudomonas putida (strain GB-1).